Consider the following 775-residue polypeptide: Isopimaradiene synthase (775 aa).

The transit peptide at 1 to 36 (MFSSSLKLKTNPLMDNKIHRSSSDRDFRGSTISSVK) directs the protein to the chloroplast. Residues Asp525, Asp529, Asn669, Gln672, and Glu677 each contribute to the Mg(2+) site. A DDXXD motif motif is present at residues 525 to 529 (DDFFD).

It belongs to the terpene synthase family. Mg(2+) serves as cofactor. In terms of tissue distribution, ubiquitous expression in roots, stems, leaves and flowers.

The protein localises to the plastid. The protein resides in the chloroplast. It carries out the reaction (+)-copalyl diphosphate = isopimara-8(14),15-diene + diphosphate. It participates in secondary metabolite biosynthesis; terpenoid biosynthesis. Its function is as follows. Involved in the biosynthesis of ent-kaurene diterpenoids natural products such as oridonin, miltiradiene, eriocalyxin B and nezukol, known to exhibit antitumor, anti-inflammatory and antibacterial activities. Catalyzes the conversion of (+)-copalyl diphosphate ((+)-CPP) to isopimaradiene. This Isodon rubescens (Rabdosia rubescens) protein is Isopimaradiene synthase.